The following is a 405-amino-acid chain: Mucosal addressin cell adhesion molecule 1 (405 aa).

The N-terminal stretch at 1–21 (MESILALLLALALVPYQLSRG) is a signal peptide. Ig-like domains follow at residues 22–109 (QSFQ…ILVY) and 110–227 (AFPD…TSPK). Over 22–364 (QSFQVNPPES…PGQVTPNSSS (343 aa)) the chain is Extracellular. Intrachain disulfides connect Cys45–Cys91, Cys49–Cys95, and Cys132–Cys200. The mucin-like stretch occupies residues 221 to 257 (QSQTSPKPPNTTSAEPYILTSSSTAEAVSTGLNITTL). Residues Asn230 and Asn253 are each glycosylated (N-linked (GlcNAc...) asparagine). The tract at residues 255-275 (TTLPSAPPYPKLSPRTLSSEG) is disordered. The 100-residue stretch at 258 to 357 (PSAPPYPKLS…EVTNLYVPGQ (100 aa)) folds into the Ig-like 3 domain. Cys293 and Cys341 are joined by a disulfide. Asn361 carries N-linked (GlcNAc...) asparagine glycosylation. The helical transmembrane segment at 365-385 (TVVLWIGSLVLGLLALVFLAY) threads the bilayer. The Cytoplasmic segment spans residues 386-405 (RLWKCYRPGPRPDTSSCTHL).

Homodimer. O-glycosylated; contains syalic acid. The Ser/Thr-rich mucin-like domain may provide possible sites for O-glycosylation. As to expression, highly expressed on high endothelial venules (HEV) of organized intestinal lymphoid tissues like the Peyer patches and mesenteric lymph nodes, and in the lamina propria of the intestine. Some expression found in the spleen, and low levels of expression in the peripheral lymph nodes and the lactating mammary gland. No expression was detected in the liver, kidneys, lungs or in normal brain. Expressed as well in brain endothelioma cells, and mucosal tissues which are in a chronic state of inflammation, such as inflamed pancreas.

It is found in the membrane. Functionally, cell adhesion leukocyte receptor expressed by mucosal venules, helps to direct lymphocyte traffic into mucosal tissues including the Peyer patches and the intestinal lamina propria. It can bind both the integrin alpha-4/beta-7 and L-selectin, regulating both the passage and retention of leukocytes. Both isoform 1 and isoform 2 can adhere to integrin alpha-4/beta-7. Isoform 2, lacking the mucin-like domain, may be specialized in supporting integrin alpha-4/beta-7-dependent adhesion strengthening, independent of L-selectin binding. The chain is Mucosal addressin cell adhesion molecule 1 (Madcam1) from Mus musculus (Mouse).